The following is a 985-amino-acid chain: Bifunctional glutamine synthetase adenylyltransferase/adenylyl-removing enzyme (985 aa).

Positions 1–460 are adenylyl removase; that stretch reads MSLPSLADFP…HFRQVIADPD (460 aa). Residues 476-985 form an adenylyl transferase region; sequence GGEWLPLWEE…MRIWAQMGLS (510 aa).

It belongs to the GlnE family. Requires Mg(2+) as cofactor.

The enzyme catalyses [glutamine synthetase]-O(4)-(5'-adenylyl)-L-tyrosine + phosphate = [glutamine synthetase]-L-tyrosine + ADP. It catalyses the reaction [glutamine synthetase]-L-tyrosine + ATP = [glutamine synthetase]-O(4)-(5'-adenylyl)-L-tyrosine + diphosphate. In terms of biological role, involved in the regulation of glutamine synthetase GlnA, a key enzyme in the process to assimilate ammonia. When cellular nitrogen levels are high, the C-terminal adenylyl transferase (AT) inactivates GlnA by covalent transfer of an adenylyl group from ATP to specific tyrosine residue of GlnA, thus reducing its activity. Conversely, when nitrogen levels are low, the N-terminal adenylyl removase (AR) activates GlnA by removing the adenylyl group by phosphorolysis, increasing its activity. The regulatory region of GlnE binds the signal transduction protein PII (GlnB) which indicates the nitrogen status of the cell. In Pseudomonas syringae pv. tomato (strain ATCC BAA-871 / DC3000), this protein is Bifunctional glutamine synthetase adenylyltransferase/adenylyl-removing enzyme.